An 869-amino-acid chain; its full sequence is Probable beta-glucosidase F (869 aa).

Residues 1 to 19 (MRVLSAIALVASLASSALS) form the signal peptide. N-linked (GlcNAc...) asparagine glycans are attached at residues Asn-77 and Asn-261. The active site involves Asp-289. Residues Asn-332, Asn-364, Asn-399, and Asn-478 are each glycosylated (N-linked (GlcNAc...) asparagine). Residues 677–697 (STYPPTRPPKGPTPTYPTAIP) are disordered. Pro residues predominate over residues 681 to 691 (PTRPPKGPTPT). N-linked (GlcNAc...) asparagine glycosylation is present at Asn-728.

It belongs to the glycosyl hydrolase 3 family.

The protein resides in the secreted. The enzyme catalyses Hydrolysis of terminal, non-reducing beta-D-glucosyl residues with release of beta-D-glucose.. Its pathway is glycan metabolism; cellulose degradation. Beta-glucosidases are one of a number of cellulolytic enzymes involved in the degradation of cellulosic biomass. Catalyzes the last step releasing glucose from the inhibitory cellobiose. The chain is Probable beta-glucosidase F (bglF) from Aspergillus fumigatus (strain CBS 144.89 / FGSC A1163 / CEA10) (Neosartorya fumigata).